A 219-amino-acid chain; its full sequence is MHLRSKPWASDWLAEHSDIVIDQDRATAQIGQWQSLFDQEQPIHLEIGSGKGQFILGMALAHPEINYIGMEIQETAIAIAARKSFDQVGTLPNLRYIYGNGNGVETYFEKGEVSKVYLNFSDPWPKKRHESRRLTYKSFLKSYEAVLPEHGEVEFKTDNRHLFEYSMVSFMDYGMRWTPEDYTLDLHADEDKVQGNVETEYEQKFMAKGQPIYKIKAHF.

Residues Glu-46, Glu-71, Asn-100, and Asp-122 each contribute to the S-adenosyl-L-methionine site. Residue Asp-122 is part of the active site. Residues Lys-126, Asp-158, and 199-202 (TEYE) contribute to the substrate site.

This sequence belongs to the class I-like SAM-binding methyltransferase superfamily. TrmB family.

The catalysed reaction is guanosine(46) in tRNA + S-adenosyl-L-methionine = N(7)-methylguanosine(46) in tRNA + S-adenosyl-L-homocysteine. It participates in tRNA modification; N(7)-methylguanine-tRNA biosynthesis. In terms of biological role, catalyzes the formation of N(7)-methylguanine at position 46 (m7G46) in tRNA. The sequence is that of tRNA (guanine-N(7)-)-methyltransferase from Leuconostoc mesenteroides subsp. mesenteroides (strain ATCC 8293 / DSM 20343 / BCRC 11652 / CCM 1803 / JCM 6124 / NCDO 523 / NBRC 100496 / NCIMB 8023 / NCTC 12954 / NRRL B-1118 / 37Y).